The primary structure comprises 329 residues: Zygote arrest protein 1 (329 aa).

Disordered regions lie at residues 106–132 (LRRRRQEVQTPGSPVSSGGVRFPRTQA) and 146–218 (FREE…DDLK). Residues 149 to 162 (EGEEEEDTDLEVTE) are compositionally biased toward acidic residues. Residues 166–177 (SAEKLESAEKNV) are compositionally biased toward basic and acidic residues. The segment at 231–314 (KYGFYHCKDC…RQDLCGRCKG (84 aa)) adopts a 3CxxC-type zinc-finger fold.

Belongs to the ZAR1 family. In terms of tissue distribution, specifically expressed in ovaries but absent in testes.

The protein localises to the cytoplasm. Its subcellular location is the cytoplasmic ribonucleoprotein granule. In terms of biological role, mRNA-binding protein required for maternal mRNA storage, translation and degradation during oocyte maturation. Probably promotes formation of some phase-separated membraneless compartment that stores maternal mRNAs in oocytes: acts by undergoing liquid-liquid phase separation upon binding to maternal mRNAs. Binds to the 3'-UTR of zona pellucida mRNAs, inhibiting their translation. This chain is Zygote arrest protein 1, found in Danio rerio (Zebrafish).